Consider the following 212-residue polypeptide: Lipopolysaccharide core heptose(II)-phosphate phosphatase (212 aa).

A signal peptide spans 1–32; it reads MSIGGVYELAFCRSSLKSKKYFIILLALAAIA.

It belongs to the phosphoglycerate mutase family. Ais subfamily.

It is found in the periplasm. It functions in the pathway bacterial outer membrane biogenesis; lipopolysaccharide metabolism. Catalyzes the dephosphorylation of heptose(II) of the outer membrane lipopolysaccharide core. The chain is Lipopolysaccharide core heptose(II)-phosphate phosphatase from Shigella boydii serotype 4 (strain Sb227).